Reading from the N-terminus, the 281-residue chain is NADH--cytochrome b5 reductase 1 (281 aa).

The helical transmembrane segment at 13–33 (ILLGVFVAFVAVGAGAAYFLT) threads the bilayer. An AKR2A-binding sequence (ABS) required for mitochondrion outer membrane targeting motif is present at residues 34–40 (SSKKRRV). An FAD-binding FR-type domain is found at 45 to 149 (ENFKEFKLVK…KGPKGRFKYQ (105 aa)). FAD is bound by residues 129–144 (REMR…GPKG) and 155–187 (AFGM…KVHL). Position 166 is a phosphothreonine (Thr166).

The protein belongs to the flavoprotein pyridine nucleotide cytochrome reductase family. In terms of assembly, monomer. Interacts with AKR2A. Requires FAD as cofactor. As to expression, expressed in roots, stems, flowers and siliques. Detected in leaves.

It is found in the mitochondrion outer membrane. The enzyme catalyses 2 Fe(III)-[cytochrome b5] + NADH = 2 Fe(II)-[cytochrome b5] + NAD(+) + H(+). Functionally, reductase transferring electrons from NADH to cytochrome b5. Required for the NADH-dependent electron transfer involved in the desaturation and hydroxylation of fatty acids and in the desaturation of sterol precursors. No activity with NADPH as electron donor. This chain is NADH--cytochrome b5 reductase 1, found in Arabidopsis thaliana (Mouse-ear cress).